Reading from the N-terminus, the 384-residue chain is Calreticulin-3 (384 aa).

Positions 1–19 are cleaved as a signal peptide; the sequence is MAAARVPLWAICVRRVALA. Positions 20 to 197 are N-domain; sequence TVYFQEEFLD…GQSIESGSIE (178 aa). N-linked (GlcNAc...) asparagine glycosylation occurs at N42. A disulfide bond links C105 and C137. Residues Y109, K111, Y128, and D135 each contribute to the an alpha-D-glucoside site. 7 repeat units span residues 191-202, 209-220, 222-231, 235-246, 250-260, 264-272, and 274-284. The 4 X approximate repeats stretch occupies residues 191–246; it reads IESGSIEYDWQLTSLKKMEKASAEAEGWDQAAKDKSQDWEKHFLDASASKPSDWKG. The P-domain stretch occupies residues 198 to 294; the sequence is YDWQLTSLKK…YLTEYDLSEF (97 aa). Positions 250 to 284 are 3 X approximate repeats; the sequence is GDWQAAMLQKPPYQDGLKPEGIDKDVWLHQKMKNS. Positions 295–384 are C-domain; sequence ENIGAVGLEL…FKGFHRRNEF (90 aa). E303 provides a ligand contact to an alpha-D-glucoside. The Prevents secretion from ER signature appears at 381–384; that stretch reads RNEF.

It belongs to the calreticulin family. As to quaternary structure, component of an EIF2 complex at least composed of CELF1/CUGBP1, CALR, CALR3, EIF2S1, EIF2S2, HSP90B1 and HSPA5.

The protein localises to the endoplasmic reticulum lumen. In terms of biological role, during spermatogenesis, may act as a lectin-independent chaperone for specific client proteins such as ADAM3. CALR3 capacity for calcium-binding may be absent or much lower than that of CALR. Required for sperm fertility. This chain is Calreticulin-3 (CALR3), found in Bos taurus (Bovine).